Reading from the N-terminus, the 318-residue chain is Electron transfer flavoprotein subunit alpha (318 aa).

257–285 lines the FAD pocket; sequence LYIALGISGAIQHRAGMQTSKTIVAVNKD.

It belongs to the ETF alpha-subunit/FixB family. Heterodimer of an alpha and a beta subunit. The cofactor is FAD.

The electron transfer flavoprotein serves as a specific electron acceptor for other dehydrogenases. It transfers the electrons to the main respiratory chain via ETF-ubiquinone oxidoreductase (ETF dehydrogenase). The sequence is that of Electron transfer flavoprotein subunit alpha (etfA) from Mycobacterium leprae (strain TN).